Reading from the N-terminus, the 568-residue chain is Urocanate hydratase (568 aa).

Residues 58–59 (GG), Gln136, 182–184 (GMG), Glu202, Arg207, 248–249 (NA), 269–273 (QTSAH), 279–280 (YL), and Tyr328 contribute to the NAD(+) site. The active site involves Cys416. An NAD(+)-binding site is contributed by Gly498.

It belongs to the urocanase family. Requires NAD(+) as cofactor.

Its subcellular location is the cytoplasm. The catalysed reaction is 4-imidazolone-5-propanoate = trans-urocanate + H2O. It participates in amino-acid degradation; L-histidine degradation into L-glutamate; N-formimidoyl-L-glutamate from L-histidine: step 2/3. Functionally, catalyzes the conversion of urocanate to 4-imidazolone-5-propionate. This chain is Urocanate hydratase, found in Photobacterium profundum (strain SS9).